The primary structure comprises 780 residues: Pentatricopeptide repeat-containing protein At1g79540 (780 aa).

17 PPR repeats span residues 91 to 125 (SRES…GVSV), 126 to 160 (DSYC…DCRP), 161 to 196 (DVFT…NCSP), 197 to 231 (NLYT…GISP), 232 to 266 (NRVT…GNYP), 267 to 301 (DSVA…GFVL), 302 to 336 (GLRG…NIKP), 337 to 371 (DIIL…GISP), 372 to 406 (DTYC…ESFP), 407 to 441 (DACT…GCSP), 442 to 476 (SVAT…RPAS), 481 to 515 (LSHS…GSSP), 516 to 550 (DIVS…GLSP), 551 to 585 (DSVT…RHSP), 653 to 687 (TLGP…KILV), 688 to 722 (TPPS…NFKL), and 723 to 758 (MPRV…GYNV).

The protein belongs to the PPR family. P subfamily.

The polypeptide is Pentatricopeptide repeat-containing protein At1g79540 (Arabidopsis thaliana (Mouse-ear cress)).